Here is a 504-residue protein sequence, read N- to C-terminus: PE-PGRS family protein PE_PGRS62 (504 aa).

In terms of domain architecture, PE spans valine 4 to asparagine 94.

This sequence belongs to the mycobacterial PE family. PGRS subfamily. As to quaternary structure, interacts with host Toll-like receptor 2 (TLR2).

The protein localises to the secreted. Its subcellular location is the cell wall. Its function is as follows. Supports mycobacterial virulence via inhibition of phagosome maturation and host inducible nitric oxide synthase (iNOS) expression. May promote the survival within macrophages by disturbing the cytokines profiles and blocking the endoplasmic reticulum (ER) stress-mediated apoptosis. May also affect bacterial cell wall composition. Functionally, expression in Mycobacterium smegmatis, a nonpathogenic species naturally deficient in PE_PGRS genes, results in enhanced resistance to various in vitro stresses. It also leads to phagosome maturation arrest and increased survival in macrophages. The chain is PE-PGRS family protein PE_PGRS62 from Mycobacterium tuberculosis (strain ATCC 25618 / H37Rv).